Reading from the N-terminus, the 102-residue chain is Small ribosomal subunit protein uS10 (102 aa).

Belongs to the universal ribosomal protein uS10 family. Part of the 30S ribosomal subunit.

Functionally, involved in the binding of tRNA to the ribosomes. This Acidithiobacillus ferrooxidans (strain ATCC 53993 / BNL-5-31) (Leptospirillum ferrooxidans (ATCC 53993)) protein is Small ribosomal subunit protein uS10.